Here is a 295-residue protein sequence, read N- to C-terminus: Methionine aminopeptidase (295 aa).

His-63 contributes to the substrate binding site. The a divalent metal cation site is built by Asp-83, Asp-94, and His-154. His-162 provides a ligand contact to substrate. Residues Glu-188 and Glu-281 each coordinate a divalent metal cation.

The protein belongs to the peptidase M24A family. Methionine aminopeptidase archaeal type 2 subfamily. Monomer. It depends on Co(2+) as a cofactor. Zn(2+) serves as cofactor. Mn(2+) is required as a cofactor. The cofactor is Fe(2+).

The enzyme catalyses Release of N-terminal amino acids, preferentially methionine, from peptides and arylamides.. In terms of biological role, removes the N-terminal methionine from nascent proteins. The N-terminal methionine is often cleaved when the second residue in the primary sequence is small and uncharged (Met-Ala-, Cys, Gly, Pro, Ser, Thr, or Val). The polypeptide is Methionine aminopeptidase (Thermococcus kodakarensis (strain ATCC BAA-918 / JCM 12380 / KOD1) (Pyrococcus kodakaraensis (strain KOD1))).